The sequence spans 560 residues: Zinc finger protein 250 (560 aa).

The KRAB domain maps to 22-93 (LTFEDVAVLL…DRKGAKKSQG (72 aa)). Residues Lys125, Lys136, Lys148, and Lys162 each participate in a glycyl lysine isopeptide (Lys-Gly) (interchain with G-Cter in SUMO2) cross-link. A C2H2-type 1 zinc finger spans residues 199 to 221 (YMCVECGKCFGRSSHLLQHQRIH). Lys225 is covalently cross-linked (Glycyl lysine isopeptide (Lys-Gly) (interchain with G-Cter in SUMO2)). 7 consecutive C2H2-type zinc fingers follow at residues 227-249 (YVCS…RRIH), 255-277 (YECN…HKIH), 283-305 (HECL…QRIH), 311-333 (YVCP…QRVH), 339-361 (HRCN…QRIH), 367-389 (YTCS…HNVH), and 395-417 (YECS…ERIH). Residue Lys421 forms a Glycyl lysine isopeptide (Lys-Gly) (interchain with G-Cter in SUMO2) linkage. C2H2-type zinc fingers lie at residues 423-445 (YACY…QRVH), 451-473 (YVCG…ERIH), 479-501 (FQCT…LRTH), 507-529 (YECN…QRIH), and 535-557 (YECG…QKVH).

This sequence belongs to the krueppel C2H2-type zinc-finger protein family.

The protein localises to the nucleus. Functionally, may be involved in transcriptional regulation. In Homo sapiens (Human), this protein is Zinc finger protein 250 (ZNF250).